Consider the following 194-residue polypeptide: Imidazoleglycerol-phosphate dehydratase (194 aa).

The protein belongs to the imidazoleglycerol-phosphate dehydratase family.

The protein resides in the cytoplasm. The catalysed reaction is D-erythro-1-(imidazol-4-yl)glycerol 3-phosphate = 3-(imidazol-4-yl)-2-oxopropyl phosphate + H2O. It functions in the pathway amino-acid biosynthesis; L-histidine biosynthesis; L-histidine from 5-phospho-alpha-D-ribose 1-diphosphate: step 6/9. The polypeptide is Imidazoleglycerol-phosphate dehydratase (Thermus thermophilus (strain ATCC BAA-163 / DSM 7039 / HB27)).